The sequence spans 663 residues: DNA topoisomerase 4 subunit B (663 aa).

ATP is bound by residues Y21, N61, D88, 130–136 (GLHGVGI), and K360. Residues 440 to 554 (TELFIVEGDS…EGHLYLAKPP (115 aa)) form the Toprim domain. E446, D519, and D521 together coordinate Mg(2+).

The protein belongs to the type II topoisomerase family. ParE type 1 subfamily. In terms of assembly, heterotetramer composed of ParC and ParE. Mg(2+) serves as cofactor. Requires Mn(2+) as cofactor. It depends on Ca(2+) as a cofactor.

The catalysed reaction is ATP-dependent breakage, passage and rejoining of double-stranded DNA.. Functionally, topoisomerase IV is essential for chromosome segregation. It relaxes supercoiled DNA. Performs the decatenation events required during the replication of a circular DNA molecule. This is DNA topoisomerase 4 subunit B from Rickettsia typhi (strain ATCC VR-144 / Wilmington).